Here is a 98-residue protein sequence, read N- to C-terminus: Integration host factor subunit alpha (98 aa).

The tract at residues 49-71 (FGNFDLRDKNQRPGRNPKTGEDI) is disordered.

The protein belongs to the bacterial histone-like protein family. In terms of assembly, heterodimer of an alpha and a beta chain.

Its function is as follows. This protein is one of the two subunits of integration host factor, a specific DNA-binding protein that functions in genetic recombination as well as in transcriptional and translational control. This chain is Integration host factor subunit alpha, found in Shewanella oneidensis (strain ATCC 700550 / JCM 31522 / CIP 106686 / LMG 19005 / NCIMB 14063 / MR-1).